The sequence spans 68 residues: Large ribosomal subunit protein uL30 (68 aa).

Belongs to the universal ribosomal protein uL30 family. Part of the 50S ribosomal subunit.

This is Large ribosomal subunit protein uL30 from Bartonella quintana (strain Toulouse) (Rochalimaea quintana).